The chain runs to 433 residues: ACT domain-containing protein ACR6 (433 aa).

4 consecutive ACT domains span residues 30–110 (VIQV…RSSV), 120–207 (SIEL…SCSD), 250–326 (VVTM…ASEG), and 328–402 (ELEL…VKKK).

Functionally, may bind amino acids. This Arabidopsis thaliana (Mouse-ear cress) protein is ACT domain-containing protein ACR6.